Here is a 312-residue protein sequence, read N- to C-terminus: Ribonuclease Z (312 aa).

The Zn(2+) site is built by histidine 62, histidine 64, aspartate 66, histidine 67, histidine 144, aspartate 215, and histidine 273. Catalysis depends on aspartate 66, which acts as the Proton acceptor.

Belongs to the RNase Z family. In terms of assembly, homodimer. Zn(2+) is required as a cofactor.

It carries out the reaction Endonucleolytic cleavage of RNA, removing extra 3' nucleotides from tRNA precursor, generating 3' termini of tRNAs. A 3'-hydroxy group is left at the tRNA terminus and a 5'-phosphoryl group is left at the trailer molecule.. Zinc phosphodiesterase, which displays some tRNA 3'-processing endonuclease activity. Probably involved in tRNA maturation, by removing a 3'-trailer from precursor tRNA. The chain is Ribonuclease Z from Prochlorococcus marinus (strain MIT 9301).